The primary structure comprises 923 residues: DNA gyrase subunit A (923 aa).

The region spanning 34 to 534 (LPDARDGLKP…SQVDLTIADL (501 aa)) is the Topo IIA-type catalytic domain. The O-(5'-phospho-DNA)-tyrosine intermediate role is filled by Y122. The short motif at 561 to 567 (QRRGGKG) is the GyrA-box element. A disordered region spans residues 881-923 (ERVQEPSGGDDEDLPEGEEAAESLGESAESESEPAAEAEGNEE). 2 stretches are compositionally biased toward acidic residues: residues 888-901 (GGDD…EEAA) and 908-923 (AESE…GNEE).

It belongs to the type II topoisomerase GyrA/ParC subunit family. Heterotetramer, composed of two GyrA and two GyrB chains. In the heterotetramer, GyrA contains the active site tyrosine that forms a transient covalent intermediate with DNA, while GyrB binds cofactors and catalyzes ATP hydrolysis.

It localises to the cytoplasm. The catalysed reaction is ATP-dependent breakage, passage and rejoining of double-stranded DNA.. Functionally, a type II topoisomerase that negatively supercoils closed circular double-stranded (ds) DNA in an ATP-dependent manner to modulate DNA topology and maintain chromosomes in an underwound state. Negative supercoiling favors strand separation, and DNA replication, transcription, recombination and repair, all of which involve strand separation. Also able to catalyze the interconversion of other topological isomers of dsDNA rings, including catenanes and knotted rings. Type II topoisomerases break and join 2 DNA strands simultaneously in an ATP-dependent manner. The chain is DNA gyrase subunit A from Pseudomonas aeruginosa (strain ATCC 15692 / DSM 22644 / CIP 104116 / JCM 14847 / LMG 12228 / 1C / PRS 101 / PAO1).